A 534-amino-acid polypeptide reads, in one-letter code: ATP-dependent RNA helicase DBP3 (534 aa).

The segment at 1–96 (MGSKRKHESG…VSSSSSGYTQ (96 aa)) is disordered. The segment covering 8-30 (ESGDVEVKKPKHDNEVKGKEKKE) has biased composition (basic and acidic residues). The segment covering 31–53 (KKEKKEKKEKKEKKEKKEKKEKK) has biased composition (basic residues). The span at 54 to 63 (EKKEKNEKKE) shows a compositional bias: basic and acidic residues. Positions 82–92 (STVSTVSSSSS) are enriched in low complexity. The Q motif signature appears at 131–157 (LSFDHVQLQSKIAPIVTKFPKPTPIQS). Residues 160–330 (WPYLLNGDDV…ATFMNKAVKV (171 aa)) form the Helicase ATP-binding domain. 173–180 (AETGSGKT) contributes to the ATP binding site. Residues 278–281 (DEAD) carry the DEAD box motif. The Helicase C-terminal domain maps to 359–504 (RLLQLLRQYG…PVPDELLKFG (146 aa)).

Belongs to the DEAD box helicase family. DDX5/DBP2 subfamily.

The protein localises to the nucleus. The protein resides in the nucleolus. The enzyme catalyses ATP + H2O = ADP + phosphate + H(+). Functionally, ATP-dependent RNA helicase required for 60S ribosomal subunit synthesis. Involved in efficient pre-rRNA processing, predominantly at site A3, which is necessary for the normal formation of 25S and 5.8S rRNAs. This is ATP-dependent RNA helicase DBP3 (DBP3) from Meyerozyma guilliermondii (strain ATCC 6260 / CBS 566 / DSM 6381 / JCM 1539 / NBRC 10279 / NRRL Y-324) (Yeast).